The primary structure comprises 225 residues: Ribonuclease 3 (225 aa).

An RNase III domain is found at 5 to 127 (MNKLTSKLGY…IIGAIYLDSD (123 aa)). A Mg(2+)-binding site is contributed by Glu-40. The active site involves Asp-44. Mg(2+) is bound by residues Asp-113 and Glu-116. Glu-116 is a catalytic residue. The DRBM domain occupies 154-224 (DPKTRLQEFL…AETALEQLTN (71 aa)).

The protein belongs to the ribonuclease III family. As to quaternary structure, homodimer. Requires Mg(2+) as cofactor.

It is found in the cytoplasm. It carries out the reaction Endonucleolytic cleavage to 5'-phosphomonoester.. Digests double-stranded RNA. Involved in the processing of primary rRNA transcript to yield the immediate precursors to the large and small rRNAs (23S and 16S). Processes some mRNAs, and tRNAs when they are encoded in the rRNA operon. Processes pre-crRNA and tracrRNA of type II CRISPR loci if present in the organism. This chain is Ribonuclease 3, found in Vibrio cholerae serotype O1 (strain ATCC 39315 / El Tor Inaba N16961).